Here is a 126-residue protein sequence, read N- to C-terminus: Small ribosomal subunit protein uS13 (126 aa).

A disordered region spans residues Leu-96–Lys-126.

This sequence belongs to the universal ribosomal protein uS13 family. In terms of assembly, part of the 30S ribosomal subunit. Forms a loose heterodimer with protein S19. Forms two bridges to the 50S subunit in the 70S ribosome.

Functionally, located at the top of the head of the 30S subunit, it contacts several helices of the 16S rRNA. In the 70S ribosome it contacts the 23S rRNA (bridge B1a) and protein L5 of the 50S subunit (bridge B1b), connecting the 2 subunits; these bridges are implicated in subunit movement. Contacts the tRNAs in the A and P-sites. The sequence is that of Small ribosomal subunit protein uS13 from Frankia alni (strain DSM 45986 / CECT 9034 / ACN14a).